The primary structure comprises 998 residues: Kinesin-like protein KIF19 (998 aa).

Residues 11 to 346 (QLMVALRVRP…LTYAGRAKNI (336 aa)) form the Kinesin motor domain. 104-111 (GPTGCGKT) contacts ATP. Coiled-coil stretches lie at residues 360–391 (HIAQ…RGQA) and 424–452 (EQLA…EVQI). Residues 482-494 (ECYAKDDSEKDSD) show a composition bias toward basic and acidic residues. The tract at residues 482–503 (ECYAKDDSEKDSDTGDDQPDIL) is disordered. A coiled-coil region spans residues 507–552 (EVAAARESIAALVDEQKQLRKQKLALEQRCRELRARGRRLEETLPR). 4 stretches are compositionally biased toward polar residues: residues 662–676 (SSLP…SLTP), 684–697 (KTLS…QNSA), 746–761 (SLGS…SENL), and 836–852 (TLQH…STGE). 4 disordered regions span residues 662–706 (SSLP…TESE), 746–765 (SLGS…SEIP), 794–911 (GTEG…THLL), and 948–998 (KLPP…SRHN). Positions 989–998 (HGKDGCSRHN) are enriched in basic and acidic residues.

The protein belongs to the TRAFAC class myosin-kinesin ATPase superfamily. Kinesin family.

The protein localises to the cytoplasm. Its subcellular location is the cytoskeleton. It localises to the cell projection. The protein resides in the cilium. Its function is as follows. Plus end-directed microtubule-dependent motor protein that regulates the length of motile cilia by mediating depolymerization of microtubules at ciliary tips. This Homo sapiens (Human) protein is Kinesin-like protein KIF19 (KIF19).